Reading from the N-terminus, the 157-residue chain is AP-1 complex subunit sigma-2 (157 aa).

This sequence belongs to the adaptor complexes small subunit family. In terms of assembly, adaptor protein complex 1 (AP-1) is a heterotetramer composed of two large adaptins (gamma-type subunit AP1G1 and beta-type subunit AP1B1), a medium adaptin (mu-type subunit AP1M1 or AP1M2) and a small adaptin (sigma-type subunit AP1S1 or AP1S2 or AP1S3). Binds to MUC1. In terms of tissue distribution, widely expressed.

It is found in the golgi apparatus. The protein resides in the cytoplasmic vesicle membrane. The protein localises to the membrane. It localises to the clathrin-coated pit. Functionally, subunit of clathrin-associated adaptor protein complex 1 that plays a role in protein sorting in the late-Golgi/trans-Golgi network (TGN) and/or endosomes. The AP complexes mediate both the recruitment of clathrin to membranes and the recognition of sorting signals within the cytosolic tails of transmembrane cargo molecules. The protein is AP-1 complex subunit sigma-2 (AP1S2) of Homo sapiens (Human).